Consider the following 167-residue polypeptide: Ribosome maturation factor RimM (167 aa).

Residues 94–166 (QNRAWLHELE…YIVVPRFDEF (73 aa)) enclose the PRC barrel domain.

Belongs to the RimM family. In terms of assembly, binds ribosomal protein uS19.

It is found in the cytoplasm. Its function is as follows. An accessory protein needed during the final step in the assembly of 30S ribosomal subunit, possibly for assembly of the head region. Essential for efficient processing of 16S rRNA. May be needed both before and after RbfA during the maturation of 16S rRNA. It has affinity for free ribosomal 30S subunits but not for 70S ribosomes. This chain is Ribosome maturation factor RimM, found in Chlorobium phaeovibrioides (strain DSM 265 / 1930) (Prosthecochloris vibrioformis (strain DSM 265)).